Reading from the N-terminus, the 513-residue chain is Maturase K (513 aa).

Belongs to the intron maturase 2 family. MatK subfamily.

It is found in the plastid. The protein localises to the chloroplast. Its function is as follows. Usually encoded in the trnK tRNA gene intron. Probably assists in splicing its own and other chloroplast group II introns. The polypeptide is Maturase K (Zea mays (Maize)).